The chain runs to 103 residues: Small ribosomal subunit protein uS14c (103 aa).

The disordered stretch occupies residues 34-56 (KVSPLSLSEKTKMREKLQSLPRN).

Belongs to the universal ribosomal protein uS14 family. In terms of assembly, part of the 30S ribosomal subunit.

Its subcellular location is the plastid. The protein resides in the chloroplast. Binds 16S rRNA, required for the assembly of 30S particles. This Brachypodium distachyon (Purple false brome) protein is Small ribosomal subunit protein uS14c.